The chain runs to 89 residues: CRISPR-associated endoribonuclease Cas2 2 (89 aa).

Residue aspartate 9 participates in Mg(2+) binding.

This sequence belongs to the CRISPR-associated endoribonuclease Cas2 protein family. Homodimer, forms a heterotetramer with a Cas1 homodimer. The cofactor is Mg(2+).

In terms of biological role, CRISPR (clustered regularly interspaced short palindromic repeat), is an adaptive immune system that provides protection against mobile genetic elements (viruses, transposable elements and conjugative plasmids). CRISPR clusters contain sequences complementary to antecedent mobile elements and target invading nucleic acids. CRISPR clusters are transcribed and processed into CRISPR RNA (crRNA). Functions as a ssRNA-specific endoribonuclease. Involved in the integration of spacer DNA into the CRISPR cassette. The sequence is that of CRISPR-associated endoribonuclease Cas2 2 from Methanospirillum hungatei JF-1 (strain ATCC 27890 / DSM 864 / NBRC 100397 / JF-1).